A 311-amino-acid polypeptide reads, in one-letter code: tRNA pseudouridine synthase B (311 aa).

Substrate is bound at residue H43. The active-site Nucleophile is the D48. Substrate contacts are provided by Y76, Y179, and L200.

It belongs to the pseudouridine synthase TruB family. Type 1 subfamily.

It carries out the reaction uridine(55) in tRNA = pseudouridine(55) in tRNA. Responsible for synthesis of pseudouridine from uracil-55 in the psi GC loop of transfer RNAs. In Sodalis glossinidius (strain morsitans), this protein is tRNA pseudouridine synthase B.